Here is a 274-residue protein sequence, read N- to C-terminus: Kit ligand (274 aa).

A signal peptide spans 1-25; that stretch reads MKKTQTWIITCIYLQLLLFNPLVHT. Gln26 carries the pyrrolidone carboxylic acid modification. Residues 26 to 215 are Extracellular-facing; the sequence is QGICSNRVTD…SNSIEDSSLQ (190 aa). 2 cysteine pairs are disulfide-bonded: Cys29-Cys114 and Cys68-Cys164. N-linked (GlcNAc...) asparagine glycans are attached at residues Asn90, Asn145, and Asn196. A helical membrane pass occupies residues 216-238; that stretch reads WAAVALPAFFSLVIGFAFGAFYW. The Cytoplasmic segment spans residues 239-274; the sequence is KKKQPNLTRTVENRQINEEDNEISMLQEKEREFQEV.

It belongs to the SCF family. Homodimer, non-covalently linked. In terms of processing, a soluble form is produced by proteolytic processing of isoform 1 in the extracellular domain.

The protein resides in the cell membrane. The protein localises to the cytoplasm. Its subcellular location is the cytoskeleton. It is found in the cell projection. It localises to the lamellipodium. The protein resides in the filopodium. The protein localises to the secreted. In terms of biological role, stimulates the proliferation of mast cells. Able to augment the proliferation of both myeloid and lymphoid hematopoietic progenitors in bone marrow culture. Also mediates cell-cell adhesion. Acts synergistically with other cytokines, probably interleukins. This Bos taurus (Bovine) protein is Kit ligand (KITLG).